The following is a 72-amino-acid chain: Translation initiation factor IF-1 (72 aa).

The region spanning 1-72 is the S1-like domain; that stretch reads MAKEDCIEME…TKGRIKFRSK (72 aa).

This sequence belongs to the IF-1 family. Component of the 30S ribosomal translation pre-initiation complex which assembles on the 30S ribosome in the order IF-2 and IF-3, IF-1 and N-formylmethionyl-tRNA(fMet); mRNA recruitment can occur at any time during PIC assembly.

Its subcellular location is the cytoplasm. In terms of biological role, one of the essential components for the initiation of protein synthesis. Stabilizes the binding of IF-2 and IF-3 on the 30S subunit to which N-formylmethionyl-tRNA(fMet) subsequently binds. Helps modulate mRNA selection, yielding the 30S pre-initiation complex (PIC). Upon addition of the 50S ribosomal subunit IF-1, IF-2 and IF-3 are released leaving the mature 70S translation initiation complex. The chain is Translation initiation factor IF-1 from Francisella tularensis subsp. tularensis (strain FSC 198).